Reading from the N-terminus, the 460-residue chain is MNMSLDPLVTGEVSHFVGIGGIGMSGLALVLRSQGKRVSGSDLKPNLQTQRLEASGISVFYGHRAENLQGVTRLVYSSAIQPDNPELLAARRGGVAVRHRAQVLAQLAEGYRMIGVSGTHGKTTTSSLIAVMLYHCGLDPTVVVGGEVDELGGNARLGSGPHLVAEVDESDGSLVLFSPEVAVVTNIEGDHLDHYANLEQIVEAFQQYANQARVVVGCLDCQAVRDRMPLTVSYSLDGHPQADYTADRVSFTAQGTTARVLERGEVLGELSLKLLGRHNLANALAAVAVGRYLGLSFEQIAAGLREFRGAHRRFERIGERDDIVFVDDYAHHPSEVRATLAAARLQGRRVVAVFQPHRYSRSQLLLDEFGTAFGDADAVVVTEIYAAGEANTLGVSGELVARRIAAHHPDVHFEATSDSLKRHLEAHLRPGDLALFLGAGNLNRIIPELLQRAEPPALAL.

118–124 (GTHGKTT) serves as a coordination point for ATP.

The protein belongs to the MurCDEF family.

The protein localises to the cytoplasm. The catalysed reaction is UDP-N-acetyl-alpha-D-muramate + L-alanine + ATP = UDP-N-acetyl-alpha-D-muramoyl-L-alanine + ADP + phosphate + H(+). The protein operates within cell wall biogenesis; peptidoglycan biosynthesis. In terms of biological role, cell wall formation. The sequence is that of UDP-N-acetylmuramate--L-alanine ligase from Gloeobacter violaceus (strain ATCC 29082 / PCC 7421).